Here is a 410-residue protein sequence, read N- to C-terminus: Peptidase T (410 aa).

Residue H79 coordinates Zn(2+). Residue D81 is part of the active site. D142 contributes to the Zn(2+) binding site. The active-site Proton acceptor is E176. Zn(2+) is bound by residues E177, D199, and H381.

It belongs to the peptidase M20B family. The cofactor is Zn(2+).

It is found in the cytoplasm. The enzyme catalyses Release of the N-terminal residue from a tripeptide.. Cleaves the N-terminal amino acid of tripeptides. The sequence is that of Peptidase T from Bacillus mycoides (strain KBAB4) (Bacillus weihenstephanensis).